We begin with the raw amino-acid sequence, 155 residues long: Egg cell-secreted protein 1.5 (155 aa).

The first 32 residues, 1–32, serve as a signal peptide directing secretion; it reads MATKSTSKPLLLSFLMMSYLISTFHVITVAEG.

This sequence belongs to the plant egg cell-secreted peptide family. As to expression, restricted to female reproductive tissues, specifically accumulating in storage vesicles of the unfertilized egg cell.

It is found in the cytoplasmic vesicle. Its subcellular location is the secreted. Functionally, involved in the regulation of gamete interactions during the double fertilization and to prevent multiple-pollen tube attraction; mediates the redistribution of the gamete fusogen HAP2/GCS1 to the cell surface after secretion upon sperm arrival. The chain is Egg cell-secreted protein 1.5 (EC1.5) from Arabidopsis thaliana (Mouse-ear cress).